The following is a 167-amino-acid chain: MNLRLELTRFLKLCFVLSSAFMFWKGLSIATNSHSPIVVVLSGSMEPAFQRGDVLFLWNRNERSKVGDVVIYEVQDKSIPIVHRVLREHHNDKNKQLLLTKGDNNAGDDIPLYGRKKIYLQKERDIVGTVKGYVPQLGYVTIWISENKYAKLALMGFLGISALLSNE.

Residues M1–K12 are Cytoplasmic-facing. A helical; Signal-anchor for type II membrane protein transmembrane segment spans residues L13 to A30. Over T31–E167 the chain is Lumenal. Residues S44, H83, and D109 each act as charge relay system in the active site. The interval A153 to L164 is C-terminal short (CTS) helix.

Belongs to the peptidase S26B family. Component of the signal peptidase complex (SPC) composed of a catalytic subunit SEC11 and three accessory subunits SPC1, SPC2 and SPC3. The complex induces a local thinning of the ER membrane which is used to measure the length of the signal peptide (SP) h-region of protein substrates. This ensures the selectivity of the complex towards h-regions shorter than 18-20 amino acids. SPC associates with the translocon complex.

Its subcellular location is the endoplasmic reticulum membrane. It catalyses the reaction Cleavage of hydrophobic, N-terminal signal or leader sequences from secreted and periplasmic proteins.. Its function is as follows. Catalytic component of the signal peptidase complex (SPC) which catalyzes the cleavage of N-terminal signal sequences from nascent proteins as they are translocated into the lumen of the endoplasmic reticulum. Specifically cleaves N-terminal signal peptides that contain a hydrophobic alpha-helix (h-region) shorter than 18-20 amino acids. The sequence is that of Signal peptidase complex catalytic subunit SEC11 (SEC11) from Zygosaccharomyces rouxii (strain ATCC 2623 / CBS 732 / NBRC 1130 / NCYC 568 / NRRL Y-229).